We begin with the raw amino-acid sequence, 336 residues long: Anthranilate phosphoribosyltransferase (336 aa).

5-phospho-alpha-D-ribose 1-diphosphate is bound by residues glycine 79, 82–83 (GD), threonine 87, 89–92 (NIST), 107–115 (KHGNRAMSS), and serine 119. Residue glycine 79 coordinates anthranilate. Serine 91 lines the Mg(2+) pocket. Asparagine 110 provides a ligand contact to anthranilate. Residue arginine 165 participates in anthranilate binding. Residues aspartate 225 and glutamate 226 each contribute to the Mg(2+) site.

The protein belongs to the anthranilate phosphoribosyltransferase family. Homodimer. Requires Mg(2+) as cofactor.

The catalysed reaction is N-(5-phospho-beta-D-ribosyl)anthranilate + diphosphate = 5-phospho-alpha-D-ribose 1-diphosphate + anthranilate. It functions in the pathway amino-acid biosynthesis; L-tryptophan biosynthesis; L-tryptophan from chorismate: step 2/5. Its function is as follows. Catalyzes the transfer of the phosphoribosyl group of 5-phosphorylribose-1-pyrophosphate (PRPP) to anthranilate to yield N-(5'-phosphoribosyl)-anthranilate (PRA). The protein is Anthranilate phosphoribosyltransferase of Dictyoglomus turgidum (strain DSM 6724 / Z-1310).